Consider the following 640-residue polypeptide: Influenza virus NS1A-binding protein homolog B (640 aa).

Positions 32-100 constitute a BTB domain; sequence CDVRLLVCGH…AYTAQLKADK (69 aa). The BACK domain occupies 135 to 186; the sequence is AISYRNFASSMADGRLLGKIDGYIQDHLHEISEQDDFLKLPRLKLEVMLEDN. Positions 257–278 are disordered; sequence KKPPRERDEMGSGASGSISPSN. The segment covering 267-278 has biased composition (low complexity); sequence GSGASGSISPSN. 6 Kelch repeats span residues 366–412, 413–460, 462–509, 510–556, 557–603, and 605–640; these read KLIA…VLMG, EVYV…SLQN, LFVV…ELSG, YMYV…VYEG, KLFV…VLNN, and LCAV…LGKN.

It localises to the cytoplasm. The protein resides in the cytoskeleton. It is found in the nucleus. Its function is as follows. Plays a role in cell division and in the dynamic organization of the actin skeleton as a stabilizer of actin filaments by association with F-actin through Kelch repeats. The sequence is that of Influenza virus NS1A-binding protein homolog B (ivns1abpb) from Danio rerio (Zebrafish).